Reading from the N-terminus, the 859-residue chain is Probable helicase A859L (859 aa).

Residues 178 to 349 (YQELQRSGRA…KNRELFGGVA (172 aa)) enclose the Helicase ATP-binding domain. ATP is bound at residue 191 to 198 (MACRCGKT). A DEAH box motif is present at residues 298-301 (DECH). The Helicase C-terminal domain occupies 394–553 (QIIMALAYLK…RFYEHLLNPS (160 aa)).

It belongs to the asfivirus helicase A859L family.

The polypeptide is Probable helicase A859L (African swine fever virus (isolate Pig/Kenya/KEN-50/1950) (ASFV)).